A 254-amino-acid chain; its full sequence is Dihydroorotate dehydrogenase B (NAD(+)), electron transfer subunit (254 aa).

The FAD-binding FR-type domain maps to 1 to 99; the sequence is MLQTEMKVIQ…LGPLGKGFDI (99 aa). FAD-binding positions include 50–53, 67–69, and 74–75; these read RPIS, LYR, and GT. 4 residues coordinate [2Fe-2S] cluster: Cys218, Cys223, Cys226, and Cys241.

The protein belongs to the PyrK family. In terms of assembly, heterotetramer of 2 PyrK and 2 PyrD type B subunits. It depends on [2Fe-2S] cluster as a cofactor. Requires FAD as cofactor.

The protein operates within pyrimidine metabolism; UMP biosynthesis via de novo pathway; orotate from (S)-dihydroorotate (NAD(+) route): step 1/1. In terms of biological role, responsible for channeling the electrons from the oxidation of dihydroorotate from the FMN redox center in the PyrD type B subunit to the ultimate electron acceptor NAD(+). The chain is Dihydroorotate dehydrogenase B (NAD(+)), electron transfer subunit from Listeria welshimeri serovar 6b (strain ATCC 35897 / DSM 20650 / CCUG 15529 / CIP 8149 / NCTC 11857 / SLCC 5334 / V8).